Here is a 443-residue protein sequence, read N- to C-terminus: Tubulin beta chain (443 aa).

GTP-binding residues include glutamine 11, glutamate 69, serine 138, glycine 142, threonine 143, glycine 144, asparagine 204, and asparagine 226. Glutamate 69 is a Mg(2+) binding site. The disordered stretch occupies residues 424 to 443 (QYQDATAEEEGEFEEEEGEN). Over residues 429–443 (TAEEEGEFEEEEGEN) the composition is skewed to acidic residues.

This sequence belongs to the tubulin family. As to quaternary structure, dimer of alpha and beta chains. A typical microtubule is a hollow water-filled tube with an outer diameter of 25 nm and an inner diameter of 15 nM. Alpha-beta heterodimers associate head-to-tail to form protofilaments running lengthwise along the microtubule wall with the beta-tubulin subunit facing the microtubule plus end conferring a structural polarity. Microtubules usually have 13 protofilaments but different protofilament numbers can be found in some organisms and specialized cells. The cofactor is Mg(2+).

It is found in the cytoplasm. It localises to the cytoskeleton. Its function is as follows. Tubulin is the major constituent of microtubules, a cylinder consisting of laterally associated linear protofilaments composed of alpha- and beta-tubulin heterodimers. Microtubules grow by the addition of GTP-tubulin dimers to the microtubule end, where a stabilizing cap forms. Below the cap, tubulin dimers are in GDP-bound state, owing to GTPase activity of alpha-tubulin. The chain is Tubulin beta chain (BETA-TT1) from Tetrahymena pyriformis.